The following is a 394-amino-acid chain: Enoyl-CoA delta isomerase 2 (394 aa).

Residues 1–38 (MAMAYLAWRLARRSCPSSLQVTSFPVVQLHMNRTAMRA) constitute a mitochondrion transit peptide. The region spanning 39–124 (SQKDFENSMN…VSSLSPSLES (86 aa)) is the ACB domain. Lysine 51 bears the N6-acetyllysine; alternate mark. Residue lysine 51 is modified to N6-succinyllysine; alternate. Lysine 55 is modified (N6-succinyllysine). N6-acetyllysine; alternate is present on lysine 62. Lysine 62 bears the N6-succinyllysine; alternate mark. 66 to 70 (YALYK) provides a ligand contact to an acyl-CoA. N6-succinyllysine occurs at positions 70, 81, and 90. The residue at position 92 (lysine 92) is an N6-acetyllysine; alternate. Lysine 92 carries the post-translational modification N6-succinyllysine; alternate. Lysine 92 is an an acyl-CoA binding site. Phosphoserine is present on serine 101. An an acyl-CoA-binding site is contributed by tyrosine 111. Serine 119 carries the phosphoserine modification. An ECH-like region spans residues 151–322 (TKIMFNRPKK…AQGLVTEVFP (172 aa)). N6-succinyllysine is present on lysine 161. Residue 198 to 202 (SGNDL) coordinates substrate. Lysine 289 carries the N6-succinyllysine modification. Positions 392–394 (SKL) match the Microbody targeting signal motif.

The protein in the C-terminal section; belongs to the enoyl-CoA hydratase/isomerase family. In terms of tissue distribution, abundant in heart, skeletal muscle and liver. Expressed in CD34(+) T-cells and CD34(+) bone marrow cells.

It is found in the mitochondrion. Its subcellular location is the peroxisome matrix. The catalysed reaction is a (3Z)-enoyl-CoA = a 4-saturated (2E)-enoyl-CoA. The enzyme catalyses (3Z)-octenoyl-CoA = (2E)-octenoyl-CoA. It carries out the reaction a (3E)-enoyl-CoA = a 4-saturated (2E)-enoyl-CoA. It catalyses the reaction (2E)-tetradecenoyl-CoA = (3Z)-tetradecenoyl-CoA. The catalysed reaction is (3E)-tetradecenoyl-CoA = (2E)-tetradecenoyl-CoA. The enzyme catalyses (3E)-octenoyl-CoA = (2E)-octenoyl-CoA. It carries out the reaction (3E)-nonenoyl-CoA = (2E)-nonenoyl-CoA. The protein operates within lipid metabolism; fatty acid beta-oxidation. Able to isomerize both 3-cis and 3-trans double bonds into the 2-trans form in a range of enoyl-CoA species. Has a preference for 3-trans substrates. This Homo sapiens (Human) protein is Enoyl-CoA delta isomerase 2 (ECI2).